The sequence spans 170 residues: MSLSSLLWAFWYILPAYFANASPVLVGGGRPIDGGRYWKDGRRVFGDGKTWRGLIGGVAIGTAVGALQYFITPEFYGSLGKALLLAFLLSFGALFGDLVGSFFKRRIDLPRGSPAIGLDQLGFLISALAFAYPVKTLDSGQIIFLLVVSPFVHWGANYFAYKMGWKSVPW.

5 consecutive transmembrane segments (helical) span residues 6-26 (LLWA…PVLV), 53-73 (GLIG…FITP), 83-103 (LLLA…GSFF), 114-134 (PAIG…AYPV), and 140-160 (GQII…NYFA).

Belongs to the CDP-archaeol synthase family. The cofactor is Mg(2+).

It localises to the cell membrane. It catalyses the reaction 2,3-bis-O-(geranylgeranyl)-sn-glycerol 1-phosphate + CTP + H(+) = CDP-2,3-bis-O-(geranylgeranyl)-sn-glycerol + diphosphate. The protein operates within membrane lipid metabolism; glycerophospholipid metabolism. Catalyzes the formation of CDP-2,3-bis-(O-geranylgeranyl)-sn-glycerol (CDP-archaeol) from 2,3-bis-(O-geranylgeranyl)-sn-glycerol 1-phosphate (DGGGP) and CTP. This reaction is the third ether-bond-formation step in the biosynthesis of archaeal membrane lipids. This is CDP-archaeol synthase from Thermococcus onnurineus (strain NA1).